The sequence spans 134 residues: Large ribosomal subunit protein eL27 (134 aa).

Residues 5 to 40 (LKSGKVVVVLSGRFAGKKAVIVRNFDDGTSSRPYGH) form the KOW domain.

It belongs to the eukaryotic ribosomal protein eL27 family.

The chain is Large ribosomal subunit protein eL27 (RPL27) from Pyrobotrys stellatus (Green alga).